The chain runs to 279 residues: Shikimate dehydrogenase (NADP(+)) (279 aa).

Shikimate-binding positions include 21 to 23 and Thr-68; that span reads SKS. Residue Lys-72 is the Proton acceptor of the active site. Glu-84 is an NADP(+) binding site. Residues Asn-93 and Asp-109 each contribute to the shikimate site. Residues 133–137, 157–162, and Met-220 each bind NADP(+); these read GAGGA and NRTQAK. Residue Tyr-222 participates in shikimate binding. Gly-244 serves as a coordination point for NADP(+).

This sequence belongs to the shikimate dehydrogenase family. Homodimer.

It carries out the reaction shikimate + NADP(+) = 3-dehydroshikimate + NADPH + H(+). It functions in the pathway metabolic intermediate biosynthesis; chorismate biosynthesis; chorismate from D-erythrose 4-phosphate and phosphoenolpyruvate: step 4/7. Functionally, involved in the biosynthesis of the chorismate, which leads to the biosynthesis of aromatic amino acids. Catalyzes the reversible NADPH linked reduction of 3-dehydroshikimate (DHSA) to yield shikimate (SA). The protein is Shikimate dehydrogenase (NADP(+)) of Shewanella halifaxensis (strain HAW-EB4).